A 416-amino-acid polypeptide reads, in one-letter code: Lipase A (416 aa).

The first 32 residues, 1-32 (MRLAPQKPLLLSTVLHLLLSIWMLGFASLAGA), serve as a signal peptide directing secretion. Cystine bridges form between C67-C391 and C177-C180. N-linked (GlcNAc...) asparagine glycosylation occurs at N179. S219 acts as the Nucleophile in catalysis. Catalysis depends on charge relay system residues D287 and H381.

This sequence belongs to the AB hydrolase superfamily. Lipase family. In terms of processing, glycosylated.

The protein resides in the secreted. It catalyses the reaction Deacetylation of xylans and xylo-oligosaccharides.. The enzyme catalyses a triacylglycerol + H2O = a diacylglycerol + a fatty acid + H(+). Lipolytic enzyme that possesses both lipase and acetylxylan esterase activity. Active towards p-nitrophenol esters of various carbon chain length with preference for medium-chain fatty acids (C-8). Also highly active on the acetylated compounds xylose tetra-acetate and oat spelt xylan. This Sodiomyces alcalophilus (Acremonium alcalophilum) protein is Lipase A.